The chain runs to 183 residues: 2-C-methyl-D-erythritol 2,4-cyclodiphosphate synthase (183 aa).

Asp-8 and His-10 together coordinate a divalent metal cation. Residues 8–10 and 34–35 each bind 4-CDP-2-C-methyl-D-erythritol 2-phosphate; these read DVH and HS. Residue His-42 coordinates a divalent metal cation. 4-CDP-2-C-methyl-D-erythritol 2-phosphate is bound by residues 56-58, 61-65, 132-135, and Phe-139; these read DIG, FPDTD, and TTEE.

Belongs to the IspF family. Homotrimer. A divalent metal cation serves as cofactor.

It carries out the reaction 4-CDP-2-C-methyl-D-erythritol 2-phosphate = 2-C-methyl-D-erythritol 2,4-cyclic diphosphate + CMP. It functions in the pathway isoprenoid biosynthesis; isopentenyl diphosphate biosynthesis via DXP pathway; isopentenyl diphosphate from 1-deoxy-D-xylulose 5-phosphate: step 4/6. Involved in the biosynthesis of isopentenyl diphosphate (IPP) and dimethylallyl diphosphate (DMAPP), two major building blocks of isoprenoid compounds. Catalyzes the conversion of 4-diphosphocytidyl-2-C-methyl-D-erythritol 2-phosphate (CDP-ME2P) to 2-C-methyl-D-erythritol 2,4-cyclodiphosphate (ME-CPP) with a corresponding release of cytidine 5-monophosphate (CMP). The sequence is that of 2-C-methyl-D-erythritol 2,4-cyclodiphosphate synthase from Lachnospira eligens (strain ATCC 27750 / DSM 3376 / VPI C15-48 / C15-B4) (Eubacterium eligens).